Reading from the N-terminus, the 146-residue chain is Putative actin-depolymerizing factor 8 (146 aa).

The region spanning 14–144 (PAWIEVPEKS…DLEVLRGRAN (131 aa)) is the ADF-H domain.

It belongs to the actin-binding proteins ADF family.

Its function is as follows. Actin-depolymerizing protein. Severs actin filaments (F-actin) and binds to actin monomers. This Oryza sativa subsp. japonica (Rice) protein is Putative actin-depolymerizing factor 8 (ADF8).